The following is a 698-amino-acid chain: DNA-directed RNA polymerase subunit beta' (698 aa).

Zn(2+) contacts are provided by Cys-69, Cys-71, Cys-89, and Cys-92. Mg(2+) contacts are provided by Asp-509, Asp-511, and Asp-513.

It belongs to the RNA polymerase beta' chain family. RpoC1 subfamily. As to quaternary structure, in plastids the minimal PEP RNA polymerase catalytic core is composed of four subunits: alpha, beta, beta', and beta''. When a (nuclear-encoded) sigma factor is associated with the core the holoenzyme is formed, which can initiate transcription. It depends on Mg(2+) as a cofactor. Zn(2+) serves as cofactor.

It is found in the plastid. The protein localises to the chloroplast. It carries out the reaction RNA(n) + a ribonucleoside 5'-triphosphate = RNA(n+1) + diphosphate. Functionally, DNA-dependent RNA polymerase catalyzes the transcription of DNA into RNA using the four ribonucleoside triphosphates as substrates. In Cryptomeria japonica (Japanese cedar), this protein is DNA-directed RNA polymerase subunit beta'.